Reading from the N-terminus, the 149-residue chain is Transcriptional repressor NrdR (149 aa).

The segment at 3–34 is a zinc-finger region; sequence CPFCFAVDTKVIDSRLVGEGSSVRRRRQCLVC. The ATP-cone domain occupies 49–139; that stretch reads PRVVKSNDVR…VYRSFEDIKE (91 aa).

The protein belongs to the NrdR family. It depends on Zn(2+) as a cofactor.

Its function is as follows. Negatively regulates transcription of bacterial ribonucleotide reductase nrd genes and operons by binding to NrdR-boxes. This is Transcriptional repressor NrdR from Escherichia coli O139:H28 (strain E24377A / ETEC).